The sequence spans 189 residues: Segregation and condensation protein B (189 aa).

The protein belongs to the ScpB family. Homodimer. Homodimerization may be required to stabilize the binding of ScpA to the Smc head domains. Component of a cohesin-like complex composed of ScpA, ScpB and the Smc homodimer, in which ScpA and ScpB bind to the head domain of Smc. The presence of the three proteins is required for the association of the complex with DNA.

The protein localises to the cytoplasm. In terms of biological role, participates in chromosomal partition during cell division. May act via the formation of a condensin-like complex containing Smc and ScpA that pull DNA away from mid-cell into both cell halves. The polypeptide is Segregation and condensation protein B (Streptococcus sanguinis (strain SK36)).